The primary structure comprises 880 residues: Leucine--tRNA ligase (880 aa).

The 'HIGH' region motif lies at 46–56; the sequence is PYPSGALHMGH. The short motif at 638 to 642 is the 'KMSKS' region element; it reads KMSKS. Lys641 contacts ATP.

This sequence belongs to the class-I aminoacyl-tRNA synthetase family.

The protein resides in the cytoplasm. The catalysed reaction is tRNA(Leu) + L-leucine + ATP = L-leucyl-tRNA(Leu) + AMP + diphosphate. The sequence is that of Leucine--tRNA ligase from Xanthomonas euvesicatoria pv. vesicatoria (strain 85-10) (Xanthomonas campestris pv. vesicatoria).